Reading from the N-terminus, the 291-residue chain is Bifunctional protein FolD (291 aa).

Residues 167 to 169 (GRS) and Ser192 each bind NADP(+).

This sequence belongs to the tetrahydrofolate dehydrogenase/cyclohydrolase family. Homodimer.

The catalysed reaction is (6R)-5,10-methylene-5,6,7,8-tetrahydrofolate + NADP(+) = (6R)-5,10-methenyltetrahydrofolate + NADPH. It carries out the reaction (6R)-5,10-methenyltetrahydrofolate + H2O = (6R)-10-formyltetrahydrofolate + H(+). It functions in the pathway one-carbon metabolism; tetrahydrofolate interconversion. In terms of biological role, catalyzes the oxidation of 5,10-methylenetetrahydrofolate to 5,10-methenyltetrahydrofolate and then the hydrolysis of 5,10-methenyltetrahydrofolate to 10-formyltetrahydrofolate. In Leptospira biflexa serovar Patoc (strain Patoc 1 / Ames), this protein is Bifunctional protein FolD.